Reading from the N-terminus, the 417-residue chain is Serine hydroxymethyltransferase (417 aa).

(6S)-5,6,7,8-tetrahydrofolate-binding positions include Leu-121 and 125-127 (GHL). Lys-229 carries the post-translational modification N6-(pyridoxal phosphate)lysine. (6S)-5,6,7,8-tetrahydrofolate is bound at residue 355–357 (SPF).

Belongs to the SHMT family. In terms of assembly, homodimer. Pyridoxal 5'-phosphate serves as cofactor.

It localises to the cytoplasm. It catalyses the reaction (6R)-5,10-methylene-5,6,7,8-tetrahydrofolate + glycine + H2O = (6S)-5,6,7,8-tetrahydrofolate + L-serine. Its pathway is one-carbon metabolism; tetrahydrofolate interconversion. It functions in the pathway amino-acid biosynthesis; glycine biosynthesis; glycine from L-serine: step 1/1. Functionally, catalyzes the reversible interconversion of serine and glycine with tetrahydrofolate (THF) serving as the one-carbon carrier. This reaction serves as the major source of one-carbon groups required for the biosynthesis of purines, thymidylate, methionine, and other important biomolecules. Also exhibits THF-independent aldolase activity toward beta-hydroxyamino acids, producing glycine and aldehydes, via a retro-aldol mechanism. In Xylella fastidiosa (strain 9a5c), this protein is Serine hydroxymethyltransferase.